Consider the following 113-residue polypeptide: U11-theraphotoxin-Hhn1a (113 aa).

Residues 1-21 form the signal peptide; sequence MNTVRVAFLLVFVLAVSLGQA. Residues 22–74 constitute a propeptide that is removed on maturation; it reads DKDENRMEMQEKTEQGKSYLDFAENLLLQKLEEPEAKLLEEDSEESRNSRQKR. Residues 58 to 69 are compositionally biased toward basic and acidic residues; it reads KLLEEDSEESRN. The tract at residues 58–83 is disordered; sequence KLLEEDSEESRNSRQKRCIGEGVPCD. Disulfide bonds link Cys75/Cys90, Cys82/Cys95, and Cys89/Cys110.

The protein belongs to the neurotoxin 14 (magi-1) family. 01 (HNTX-16) subfamily. In terms of tissue distribution, expressed by the venom gland.

Its subcellular location is the secreted. Its function is as follows. Probable ion channel inhibitor. This chain is U11-theraphotoxin-Hhn1a, found in Cyriopagopus hainanus (Chinese bird spider).